We begin with the raw amino-acid sequence, 307 residues long: MISAKMVKDLREKTGAGMMDCKKALTECDGDLEKAVEVLREKGLAAAAKKSGRVAAEGIVSTYISEDMKNGSIVEFNCETDFVSVNELFVELANNLSKQAAFSNVSTAEELLEEKYIADESKLVKDVITELIAKLGENMNLRRIAKLSVDKGVIKSYIHGGGRIGVLVKLACEKEDAKLAEIAKDVAMQVAATNPLFLNRDGVDTDTLEKEKEIYRVQALNEGKPEKVVEKMVMGRINKYYKENCLVEQLWVKNGDYTITKYLQEQSKEIGADITVEAFVRYEKGEGIEKKEEDFAEEVQRQMNQGK.

The tract at residues 80 to 83 (TDFV) is involved in Mg(2+) ion dislocation from EF-Tu.

This sequence belongs to the EF-Ts family.

The protein resides in the cytoplasm. Its function is as follows. Associates with the EF-Tu.GDP complex and induces the exchange of GDP to GTP. It remains bound to the aminoacyl-tRNA.EF-Tu.GTP complex up to the GTP hydrolysis stage on the ribosome. This Clostridium botulinum (strain Loch Maree / Type A3) protein is Elongation factor Ts.